The following is a 313-amino-acid chain: uncharacterized protein (313 aa).

This is an uncharacterized protein from Archaeoglobus fulgidus (strain ATCC 49558 / DSM 4304 / JCM 9628 / NBRC 100126 / VC-16).